A 210-amino-acid chain; its full sequence is Ras-related protein Rab-8 (210 aa).

Gly15–Thr22 is a binding site for GTP. Positions Phe37 to Phe45 match the Effector region motif. Residues Asp63 to Gln67 and Asn121 to Asp124 contribute to the GTP site. A Cysteine methyl ester modification is found at Cys207. A lipid anchor (S-geranylgeranyl cysteine) is attached at Cys207. Positions Ser208–Leu210 are cleaved as a propeptide — removed in mature form.

The protein belongs to the small GTPase superfamily. Rab family.

It localises to the cell membrane. The chain is Ras-related protein Rab-8 from Diplobatis ommata (Ocellated electric ray).